The chain runs to 190 residues: dTTP/UTP pyrophosphatase (190 aa).

Asp71 acts as the Proton acceptor in catalysis.

The protein belongs to the Maf family. YhdE subfamily. A divalent metal cation serves as cofactor.

The protein resides in the cytoplasm. The catalysed reaction is dTTP + H2O = dTMP + diphosphate + H(+). The enzyme catalyses UTP + H2O = UMP + diphosphate + H(+). Nucleoside triphosphate pyrophosphatase that hydrolyzes dTTP and UTP. May have a dual role in cell division arrest and in preventing the incorporation of modified nucleotides into cellular nucleic acids. This Xanthomonas axonopodis pv. citri (strain 306) protein is dTTP/UTP pyrophosphatase.